The chain runs to 1052 residues: uncharacterized protein (1052 aa).

It belongs to the IIV-6 050L family.

This is an uncharacterized protein from Invertebrate iridescent virus 6 (IIV-6).